Reading from the N-terminus, the 368-residue chain is MSILDVIKQSNDMMPESYKELSRKDMETRVAAIKKKFGSRLFIPGHHYQKDEVIQFADQTGDSLQLAQVAEKNKEADYIVFCGVHFMAETADMLTSEQQTVVLPDMRAGCSMADMADMQQTNRAWKKLQHIFGDTIIPLTYVNSTAEIKAFVGKHGGATVTSSNAKKVLEWAFTQKKRILFLPDQHLGRNTAYDLGIALEDMAVWDPMKDELVAESGHTNVKVILWKGHCSVHEKFTTKNIHDMRERDPDIQIIVHPECSHEVVTLSDDNGSTKYIIDTINQAPAGSKWAIGTEMNLVQRIIHEHPDKQIESLNPDMCPCLTMNRIDLPHLLWSLEQIEKGEPSGVIKVPKAIQEDALLALNRMLSIT.

Iminosuccinate contacts are provided by H46 and S63. Residue C110 coordinates [4Fe-4S] cluster. Iminosuccinate contacts are provided by residues 141–143 and S162; that span reads YVN. [4Fe-4S] cluster is bound at residue C230. Iminosuccinate-binding positions include 256–258 and T273; that span reads HPE. Residue C320 coordinates [4Fe-4S] cluster.

The protein belongs to the quinolinate synthase family. Type 3 subfamily. In terms of assembly, homotrimer. It depends on [4Fe-4S] cluster as a cofactor.

The protein localises to the cytoplasm. The enzyme catalyses iminosuccinate + dihydroxyacetone phosphate = quinolinate + phosphate + 2 H2O + H(+). It functions in the pathway cofactor biosynthesis; NAD(+) biosynthesis; quinolinate from iminoaspartate: step 1/1. Its function is as follows. Catalyzes the condensation of iminoaspartate with dihydroxyacetone phosphate to form quinolinate. In Bacillus subtilis (strain 168), this protein is Quinolinate synthase.